The chain runs to 564 residues: Dihydroxy-acid dehydratase (564 aa).

A [2Fe-2S] cluster-binding site is contributed by Cys50. A Mg(2+)-binding site is contributed by Asp82. Cys123 serves as a coordination point for [2Fe-2S] cluster. Residues Asp124 and Lys125 each contribute to the Mg(2+) site. The residue at position 125 (Lys125) is an N6-carboxylysine. Position 195 (Cys195) interacts with [2Fe-2S] cluster. Glu447 contacts Mg(2+). Ser473 serves as the catalytic Proton acceptor.

It belongs to the IlvD/Edd family. As to quaternary structure, homodimer. It depends on [2Fe-2S] cluster as a cofactor. Requires Mg(2+) as cofactor.

It carries out the reaction (2R)-2,3-dihydroxy-3-methylbutanoate = 3-methyl-2-oxobutanoate + H2O. The catalysed reaction is (2R,3R)-2,3-dihydroxy-3-methylpentanoate = (S)-3-methyl-2-oxopentanoate + H2O. It participates in amino-acid biosynthesis; L-isoleucine biosynthesis; L-isoleucine from 2-oxobutanoate: step 3/4. Its pathway is amino-acid biosynthesis; L-valine biosynthesis; L-valine from pyruvate: step 3/4. In terms of biological role, functions in the biosynthesis of branched-chain amino acids. Catalyzes the dehydration of (2R,3R)-2,3-dihydroxy-3-methylpentanoate (2,3-dihydroxy-3-methylvalerate) into 2-oxo-3-methylpentanoate (2-oxo-3-methylvalerate) and of (2R)-2,3-dihydroxy-3-methylbutanoate (2,3-dihydroxyisovalerate) into 2-oxo-3-methylbutanoate (2-oxoisovalerate), the penultimate precursor to L-isoleucine and L-valine, respectively. The polypeptide is Dihydroxy-acid dehydratase (Chloroflexus aggregans (strain MD-66 / DSM 9485)).